The sequence spans 1058 residues: Carbamoyl phosphate synthase large chain (1058 aa).

Residues 1-401 (MPKRKDIQKI…SLLKACRSLE (401 aa)) form a carboxyphosphate synthetic domain region. Residues R129, R169, G175, G176, R208, I210, E215, G241, I242, H243, Q284, and E298 each contribute to the ATP site. The 195-residue stretch at 133 to 327 (KQLMQELDQP…IAKLAAKIAV (195 aa)) folds into the ATP-grasp 1 domain. Residues Q284, E298, and N300 each coordinate Mg(2+). Mn(2+) is bound by residues Q284, E298, and N300. Positions 402-546 (IGVCHNEMTS…YSTYELENES (145 aa)) are oligomerization domain. The carbamoyl phosphate synthetic domain stretch occupies residues 547–929 (VQSNKESILV…ALYKAFEANN (383 aa)). In terms of domain architecture, ATP-grasp 2 spans 671–861 (EKALKELGIP…MAQIATKLIL (191 aa)). Residues R707, S746, I748, E752, G777, V778, H779, S780, Q820, and E832 each coordinate ATP. Q820, E832, and N834 together coordinate Mg(2+). Mn(2+) contacts are provided by Q820, E832, and N834. The 129-residue stretch at 930–1058 (SHLSEFGQIV…ESRCFNIEAI (129 aa)) folds into the MGS-like domain. An allosteric domain region spans residues 930–1058 (SHLSEFGQIV…ESRCFNIEAI (129 aa)).

The protein belongs to the CarB family. Composed of two chains; the small (or glutamine) chain promotes the hydrolysis of glutamine to ammonia, which is used by the large (or ammonia) chain to synthesize carbamoyl phosphate. Tetramer of heterodimers (alpha,beta)4. Mg(2+) is required as a cofactor. Requires Mn(2+) as cofactor.

It carries out the reaction hydrogencarbonate + L-glutamine + 2 ATP + H2O = carbamoyl phosphate + L-glutamate + 2 ADP + phosphate + 2 H(+). It catalyses the reaction hydrogencarbonate + NH4(+) + 2 ATP = carbamoyl phosphate + 2 ADP + phosphate + 2 H(+). Its pathway is amino-acid biosynthesis; L-arginine biosynthesis; carbamoyl phosphate from bicarbonate: step 1/1. The protein operates within pyrimidine metabolism; UMP biosynthesis via de novo pathway; (S)-dihydroorotate from bicarbonate: step 1/3. Functionally, large subunit of the glutamine-dependent carbamoyl phosphate synthetase (CPSase). CPSase catalyzes the formation of carbamoyl phosphate from the ammonia moiety of glutamine, carbonate, and phosphate donated by ATP, constituting the first step of 2 biosynthetic pathways, one leading to arginine and/or urea and the other to pyrimidine nucleotides. The large subunit (synthetase) binds the substrates ammonia (free or transferred from glutamine from the small subunit), hydrogencarbonate and ATP and carries out an ATP-coupled ligase reaction, activating hydrogencarbonate by forming carboxy phosphate which reacts with ammonia to form carbamoyl phosphate. The protein is Carbamoyl phosphate synthase large chain of Streptococcus pyogenes serotype M1.